A 612-amino-acid chain; its full sequence is Transcription factor unc-37 (612 aa).

Positions 143 to 228 (FASPHVNGGD…SNSRARQQQQ (86 aa)) are disordered. A compositionally biased stretch (gly residues) spans 150-159 (GGDGAGGSSG). The tract at residues 153-196 (GAGGSSGGASEAKKAKLEDPDDGELEIDVTNDDHPSTASNGGAA) is CCN domain. Positions 171–182 (DPDDGELEIDVT) are enriched in acidic residues. The span at 202-221 (DSTNSVASSGASTPSIASNS) shows a compositional bias: polar residues. WD repeat units lie at residues 308 to 339 (GIPT…RVYT), 372 to 402 (LKEN…ALWD), 414 to 444 (TDSQ…LIYD), 456 to 486 (GHQD…RCWD), 538 to 568 (QHES…NAWR), and 579 to 609 (KENS…TLYA).

The protein belongs to the WD repeat Groucho/TLE family. In terms of assembly, interacts with unc-4. Interacts with ref-1. May interact with mls-1.

The protein resides in the nucleus. Its function is as follows. Transcriptional corepressor that functions with the neural specificity gene unc-4 to govern motor neuron identity. In concert with unc-4, represses the expression of VB-specific genes such as ceh-12, thereby preventing the adoption of VB motor neuron fate. May function with transcription factor mls-1 to promote uterine muscle specification and formation. This chain is Transcription factor unc-37 (unc-37), found in Caenorhabditis elegans.